The following is a 272-amino-acid chain: Putative phosphoenolpyruvate synthase regulatory protein (272 aa).

152-159 (GVSRCGKT) contributes to the ADP binding site.

This sequence belongs to the pyruvate, phosphate/water dikinase regulatory protein family. PSRP subfamily.

The enzyme catalyses [pyruvate, water dikinase] + ADP = [pyruvate, water dikinase]-phosphate + AMP + H(+). It carries out the reaction [pyruvate, water dikinase]-phosphate + phosphate + H(+) = [pyruvate, water dikinase] + diphosphate. Functionally, bifunctional serine/threonine kinase and phosphorylase involved in the regulation of the phosphoenolpyruvate synthase (PEPS) by catalyzing its phosphorylation/dephosphorylation. This Pseudomonas fluorescens (strain ATCC BAA-477 / NRRL B-23932 / Pf-5) protein is Putative phosphoenolpyruvate synthase regulatory protein.